Reading from the N-terminus, the 328-residue chain is Cytochrome c biogenesis protein CcsA (328 aa).

The next 8 membrane-spanning stretches (helical) occupy residues 13–33 (ISFS…LVNL), 46–66 (GIII…IYSG), 73–93 (LYES…VSYF), 101–121 (LNTI…SGLL), 146–166 (MILG…LLVI), 234–254 (IISL…VWAN), 263–283 (WDPK…YLHI), and 295–315 (AIVA…VNLL).

It belongs to the CcmF/CycK/Ccl1/NrfE/CcsA family. In terms of assembly, may interact with Ccs1.

The protein resides in the plastid. It is found in the chloroplast thylakoid membrane. Its function is as follows. Required during biogenesis of c-type cytochromes (cytochrome c6 and cytochrome f) at the step of heme attachment. The protein is Cytochrome c biogenesis protein CcsA of Arabidopsis thaliana (Mouse-ear cress).